The following is a 1267-amino-acid chain: DNA-directed RNA polymerase subunit beta'' (1267 aa).

Zn(2+) contacts are provided by Cys-222, Cys-290, Cys-297, and Cys-300.

This sequence belongs to the RNA polymerase beta' chain family. RpoC2 subfamily. In terms of assembly, in plastids the minimal PEP RNA polymerase catalytic core is composed of four subunits: alpha, beta, beta', and beta''. When a (nuclear-encoded) sigma factor is associated with the core the holoenzyme is formed, which can initiate transcription. Requires Zn(2+) as cofactor.

The protein localises to the plastid. It localises to the chloroplast. The enzyme catalyses RNA(n) + a ribonucleoside 5'-triphosphate = RNA(n+1) + diphosphate. Functionally, DNA-dependent RNA polymerase catalyzes the transcription of DNA into RNA using the four ribonucleoside triphosphates as substrates. This chain is DNA-directed RNA polymerase subunit beta'', found in Emiliania huxleyi (Coccolithophore).